The primary structure comprises 161 residues: Large ribosomal subunit protein bL17 (161 aa).

Residues 126–161 form a disordered region; the sequence is KVAKKATRTRRSKKTTEAAPAAEVPATEEPKAESAE. A compositionally biased stretch (basic residues) spans 129–138; sequence KKATRTRRSK. Residues 142–152 show a composition bias toward low complexity; the sequence is EAAPAAEVPAT.

The protein belongs to the bacterial ribosomal protein bL17 family. Part of the 50S ribosomal subunit. Contacts protein L32.

The polypeptide is Large ribosomal subunit protein bL17 (Bacteroides fragilis (strain ATCC 25285 / DSM 2151 / CCUG 4856 / JCM 11019 / LMG 10263 / NCTC 9343 / Onslow / VPI 2553 / EN-2)).